The following is a 1202-amino-acid chain: Voltage-gated inwardly rectifying potassium channel KCNH6 (1202 aa).

Topologically, residues 1–405 are cytoplasmic; that stretch reads MGSAALPHAR…YSPFKAVWDW (405 aa). In terms of domain architecture, PAS spans 36 to 84; that stretch reads IIYCNDGFCEMFGYSRVEVMQRPCTCDFLTGPDTTKSSIAQLTQALLGS. Residues 87-139 enclose the PAC domain; sequence CKLEILYYRKDTSCFRCLVDVVPVKNEDGVVIMFILNFEDLAQLIAKSSGRSL. 2 disordered regions span residues 203-243 and 285-315; these read ENCV…LGPR and ERRANSEGGMGLSGKASHVKPNPPNSTSDSD. Residues 213–222 are compositionally biased toward basic and acidic residues; that stretch reads LLEKERRPSL. Residues 406-426 form a helical membrane-spanning segment; the sequence is LILLLVIYTAVFTPYSAAFLL. Residues 427-443 lie on the Extracellular side of the membrane; that stretch reads NEEQGEEKHWNCSYSCD. An N-linked (GlcNAc...) asparagine glycan is attached at Asn437. Residues 444 to 464 form a helical membrane-spanning segment; the sequence is PLNIIDLIVDIMFIVDIVINF. Residues 465-485 are Cytoplasmic-facing; that stretch reads RTTYVNINDEVVSHPGKIAIH. A helical transmembrane segment spans residues 486–506; sequence YFKGWFLIDMVAAIPFDLLIF. Over 507-515 the chain is Extracellular; that stretch reads RSGSDETTT. Residues 516–536 traverse the membrane as a helical; Voltage-sensor segment; sequence LIGLLKTARLLRLVRVARKLD. The Cytoplasmic segment spans residues 537 to 543; that stretch reads RYSEYGA. The chain crosses the membrane as a helical span at residues 544–564; the sequence is AVLFLLMCTFALIAHWLACIW. Residues 565-608 lie on the Extracellular side of the membrane; the sequence is YAIGNVERPYMEHKIGWLDNLGDQIGKRYNDSDLSSGPSIKDKY. Asn594 carries an N-linked (GlcNAc...) asparagine glycan. The segment at residues 609–629 is an intramembrane region (pore-forming); that stretch reads VTALYFTFSSLTSVGFGNVSP. Residues 621–626 carry the Selectivity filter motif; it reads SVGFGN. The Extracellular portion of the chain corresponds to 630–635; sequence NTNSEK. Residues 636–656 form a helical membrane-spanning segment; sequence IFSICVMLIGSLMYASIFGNV. Topologically, residues 657-1202 are cytoplasmic; that stretch reads SAIIQRLYSG…HLSDPVLPGS (546 aa). The cNMP-binding domain stretch occupies residues 739-839; it reads AFRGASKGCL…IQREDLLEVL (101 aa). 3 disordered regions span residues 912 to 948, 1092 to 1112, and 1140 to 1202; these read LTNPQDPLSKDQWDDVGSSTTPCSQTSDDEAKPGSPT, TPCAPLEDEQQTAPGQSPSYA, and TVYS…LPGS. Positions 928–937 are enriched in polar residues; that stretch reads GSSTTPCSQT. Over residues 1179–1195 the composition is skewed to basic and acidic residues; the sequence is EHLEASSEHQDIQRHLS.

This sequence belongs to the potassium channel family. H (Eag) (TC 1.A.1.20) subfamily. Kv11.2/KCNH6 sub-subfamily. In terms of assembly, the potassium channel is probably composed of a homo- or heterotetrameric complex of pore-forming alpha subunits that can associate only within their subfamily.

The protein localises to the cell membrane. The enzyme catalyses K(+)(in) = K(+)(out). Pore-forming (alpha) subunit of voltage-gated inwardly rectifying potassium channel. Characterized by unusual gating kinetics by producing relatively small outward currents during membrane depolarization and large inward currents during subsequent repolarization which reflect a rapid inactivation during depolarization and quick recovery from inactivation but slow deactivation (closing) during repolarization. Activates even more slowly than KCNH2. This is Voltage-gated inwardly rectifying potassium channel KCNH6 from Gallus gallus (Chicken).